The primary structure comprises 400 residues: Formate-dependent phosphoribosylglycinamide formyltransferase (400 aa).

N(1)-(5-phospho-beta-D-ribosyl)glycinamide contacts are provided by residues 22-23 and Glu82; that span reads EL. ATP-binding positions include Arg115, Lys156, 161–166, 196–199, and Glu204; these read SSGKGQ and EGFI. The 190-residue stretch at 120–309 folds into the ATP-grasp domain; it reads RLAAETLGLP…EFALHARAIL (190 aa). Mg(2+) contacts are provided by Glu268 and Glu280. N(1)-(5-phospho-beta-D-ribosyl)glycinamide contacts are provided by residues Asp287, Lys361, and 368–369; that span reads RR.

The protein belongs to the PurK/PurT family. In terms of assembly, homodimer.

It carries out the reaction N(1)-(5-phospho-beta-D-ribosyl)glycinamide + formate + ATP = N(2)-formyl-N(1)-(5-phospho-beta-D-ribosyl)glycinamide + ADP + phosphate + H(+). The protein operates within purine metabolism; IMP biosynthesis via de novo pathway; N(2)-formyl-N(1)-(5-phospho-D-ribosyl)glycinamide from N(1)-(5-phospho-D-ribosyl)glycinamide (formate route): step 1/1. Involved in the de novo purine biosynthesis. Catalyzes the transfer of formate to 5-phospho-ribosyl-glycinamide (GAR), producing 5-phospho-ribosyl-N-formylglycinamide (FGAR). Formate is provided by PurU via hydrolysis of 10-formyl-tetrahydrofolate. The protein is Formate-dependent phosphoribosylglycinamide formyltransferase of Xanthomonas oryzae pv. oryzae (strain PXO99A).